The following is a 313-amino-acid chain: 2-phosphoglycerate kinase (313 aa).

Positions 8-95 (SRILVKDKEY…LWRRVLKKHS (88 aa)) constitute an ATP-cone domain.

The protein belongs to the 2-phosphoglycerate kinase family. A divalent metal cation is required as a cofactor.

It carries out the reaction (2R)-2-phosphoglycerate + ATP = (2R)-2,3-bisphosphoglycerate + ADP + H(+). It participates in thermoadapter biosynthesis; cyclic 2,3-diphosphoglycerate biosynthesis; cyclic 2,3-diphosphoglycerate from 2-phospho-D-glycerate: step 1/2. Catalyzes the phosphorylation of 2-phosphoglycerate to 2,3-diphosphoglycerate. Involved in the biosynthesis of cyclic 2,3-bisphosphoglycerate, a thermoprotectant. In Methanococcus maripaludis (strain C5 / ATCC BAA-1333), this protein is 2-phosphoglycerate kinase.